The chain runs to 199 residues: N-(5'-phosphoribosyl)anthranilate isomerase (199 aa).

The protein belongs to the TrpF family.

The catalysed reaction is N-(5-phospho-beta-D-ribosyl)anthranilate = 1-(2-carboxyphenylamino)-1-deoxy-D-ribulose 5-phosphate. Its pathway is amino-acid biosynthesis; L-tryptophan biosynthesis; L-tryptophan from chorismate: step 3/5. The sequence is that of N-(5'-phosphoribosyl)anthranilate isomerase from Streptococcus pneumoniae (strain Hungary19A-6).